Consider the following 27-residue polypeptide: GIGSAILSAGKSALKGLAKGLAEHFAN.

N27 is subject to Asparagine amide.

It belongs to the bombinin family. Expressed by the skin glands.

The protein localises to the secreted. Its function is as follows. Has antimicrobial activity, but no hemolytic activity. Preference on killing Gram-negative non-enteric bacteria. This chain is Bombinin-like peptide 2, found in Bombina orientalis (Oriental fire-bellied toad).